We begin with the raw amino-acid sequence, 196 residues long: Protein GrpE (196 aa).

Residues 1-40 (MSSKEQKTPEGQAPEEIIMDQHEEVEAVEPNDSAEQVDPR) form a disordered region.

This sequence belongs to the GrpE family. Homodimer.

The protein localises to the cytoplasm. Functionally, participates actively in the response to hyperosmotic and heat shock by preventing the aggregation of stress-denatured proteins, in association with DnaK and GrpE. It is the nucleotide exchange factor for DnaK and may function as a thermosensor. Unfolded proteins bind initially to DnaJ; upon interaction with the DnaJ-bound protein, DnaK hydrolyzes its bound ATP, resulting in the formation of a stable complex. GrpE releases ADP from DnaK; ATP binding to DnaK triggers the release of the substrate protein, thus completing the reaction cycle. Several rounds of ATP-dependent interactions between DnaJ, DnaK and GrpE are required for fully efficient folding. This is Protein GrpE from Salmonella enteritidis PT4 (strain P125109).